We begin with the raw amino-acid sequence, 468 residues long: 3-isopropylmalate dehydratase large subunit (468 aa).

[4Fe-4S] cluster is bound by residues C347, C407, and C410.

The protein belongs to the aconitase/IPM isomerase family. LeuC type 1 subfamily. In terms of assembly, heterodimer of LeuC and LeuD. [4Fe-4S] cluster serves as cofactor.

The catalysed reaction is (2R,3S)-3-isopropylmalate = (2S)-2-isopropylmalate. The protein operates within amino-acid biosynthesis; L-leucine biosynthesis; L-leucine from 3-methyl-2-oxobutanoate: step 2/4. Functionally, catalyzes the isomerization between 2-isopropylmalate and 3-isopropylmalate, via the formation of 2-isopropylmaleate. This is 3-isopropylmalate dehydratase large subunit from Campylobacter jejuni subsp. jejuni serotype O:6 (strain 81116 / NCTC 11828).